Consider the following 190-residue polypeptide: Allergen Alt a 2 (190 aa).

The protein is Allergen Alt a 2 (ALTA2) of Alternaria alternata (Alternaria rot fungus).